The primary structure comprises 210 residues: Na(+)-translocating NADH-quinone reductase subunit D (210 aa).

5 helical membrane passes run 42–62, 72–92, 103–123, 131–151, and 178–198; these read FVMT…VSLI, IIVQ…ILKA, VFVG…AFAM, LIDG…VGFF, and NGLM…IWAI.

It belongs to the NqrDE/RnfAE family. Composed of six subunits; NqrA, NqrB, NqrC, NqrD, NqrE and NqrF.

The protein localises to the cell inner membrane. The enzyme catalyses a ubiquinone + n Na(+)(in) + NADH + H(+) = a ubiquinol + n Na(+)(out) + NAD(+). In terms of biological role, NQR complex catalyzes the reduction of ubiquinone-1 to ubiquinol by two successive reactions, coupled with the transport of Na(+) ions from the cytoplasm to the periplasm. NqrA to NqrE are probably involved in the second step, the conversion of ubisemiquinone to ubiquinol. The chain is Na(+)-translocating NADH-quinone reductase subunit D from Vibrio vulnificus (strain CMCP6).